Reading from the N-terminus, the 132-residue chain is uncharacterized protein (132 aa).

This is an uncharacterized protein from Acanthamoeba polyphaga (Amoeba).